The primary structure comprises 883 residues: Glutamate receptor 2 (883 aa).

An N-terminal signal peptide occupies residues 1-24; that stretch reads MQKIMHISVLLSPVLWGLIFGVSS. Residues 25 to 543 lie on the Extracellular side of the membrane; it reads NSIQIGGLFP…GVFSFLDPLA (519 aa). Cysteines 78 and 330 form a disulfide. N-linked (GlcNAc...) asparagine glycans are attached at residues Asn-256, Asn-370, Asn-406, and Asn-413. The L-glutamate site is built by Pro-499, Thr-501, and Arg-506. The chain crosses the membrane as a helical span at residues 544–564; sequence YEIWMCIVFAYIGVSVVLFLV. Residues 565-591 lie on the Cytoplasmic side of the membrane; it reads SRFSPYEWHTEEFEDGRETQSSESTNE. Positions 592 to 607 form an intramembrane region, helical; Pore-forming; the sequence is FGIFNSLWFSLGAFMQ. An intramembrane segment occupies 608–610; it reads QGC. Cys-610 carries the S-palmitoyl cysteine lipid modification. At 611 to 616 the chain is on the cytoplasmic side; that stretch reads DISPRS. A helical transmembrane segment spans residues 617–637; it reads LSGRIVGGVWWFFTLIIISSY. Over 638–812 the chain is Extracellular; it reads TANLAAFLTV…EKTSALSLSN (175 aa). Ser-675 and Thr-676 together coordinate L-glutamate. Position 683 is a phosphoserine; by PKC (Ser-683). Ser-717 carries the post-translational modification Phosphoserine; by PKG. Glu-726 is an L-glutamate binding site. A disulfide bridge links Cys-739 with Cys-794. Residues 813–833 traverse the membrane as a helical segment; sequence VAGVFYILVGGLGLAMLVALI. At 834–883 the chain is on the cytoplasmic side; that stretch reads EFCYKSRAEAKRMKVAKNAQNINPSSSQNSQNFATYKEGYNVYGIESVKI. Cys-836 carries S-palmitoyl cysteine lipidation. Phosphoserine occurs at positions 860 and 863. The required for interaction with IQSEC1 stretch occupies residues 867 to 877; the sequence is ATYKEGYNVYG. Phosphotyrosine is present on Tyr-876. Ser-880 is subject to Phosphoserine.

The protein belongs to the glutamate-gated ion channel (TC 1.A.10.1) family. GRIA2 subfamily. In terms of assembly, homotetramer or heterotetramer of pore-forming glutamate receptor subunits. Tetramers may be formed by the dimerization of dimers. May interact with MPP4. Forms a ternary complex with GRIP1 and CSPG4. Interacts with ATAD1 in an ATP-dependent manner. ATAD1-catalyzed ATP hydrolysis disrupts binding to ATAD1 and to GRIP1 and leads to AMPAR complex disassembly. Interacts with GRIP1 and GRIP2. Interacts with NSF via its C-terminus. Isoform 1, but not isoform 3, interacts with PICK1. Interacts with CACNG2. Interacts with GRIA1 and SYNDIG1. Part of a complex containing GRIA2, NSF and NAPA and/or NAPB. Interacts with SNX27 (via PDZ domain); the interaction is required for recycling to the plasma membrane when endocytosed and prevent degradation in lysosomes. Interacts with LRFN1. Found in a complex with GRIA1, GRIA3, GRIA4, CNIH2, CNIH3, CACNG2, CACNG3, CACNG4, CACNG5, CACNG7 and CACNG8. Interacts with CACNG5. Interacts with OLFM2. Interacts with AP4B1, AP4E1 and AP4M1; probably indirect it mediates the somatodendritic localization of GRIA2 in neurons. Forms a complex with GRIP1, NSG1 and STX12; controls the intracellular fate of AMPAR and the endosomal sorting of the GRIA2 subunit toward recycling and membrane targeting. Interacts with IQSEC1; the interaction is required for ARF6 activation. Interacts (heterotetramer form) with CNIH2 and CNIH3; this interaction promotes expression at the plasma membrane and extensively modulates their gating properties by slowing deactivation and desensitization kinetics. Post-translationally, palmitoylated. Depalmitoylated upon L-glutamate stimulation. ZDHHC3/GODZ specifically palmitoylates Cys-610, which leads to Golgi retention and decreased cell surface expression. In contrast, Cys-836 palmitoylation does not affect cell surface expression but regulates stimulation-dependent endocytosis. N-glycosylated. In terms of processing, ubiquitinated by RNF167, leading to its degradation. Post-translationally, phosphorylation at Tyr-876 is required for interaction with IQSEC1 and ARF6 activation, which in turn triggers AMPAR internalization for persistent synaptic depression. As to expression, detected in brain cortex, hippocampus and cerebellum (at protein level). Detected in hippocampus.

The protein localises to the cell membrane. It localises to the postsynaptic cell membrane. It is found in the postsynaptic density membrane. The enzyme catalyses Ca(2+)(in) = Ca(2+)(out). The catalysed reaction is Na(+)(in) = Na(+)(out). Its function is as follows. Ionotropic glutamate receptor that functions as a ligand-gated cation channel, gated by L-glutamate and glutamatergic agonists such as alpha-amino-3-hydroxy-5-methyl-4-isoxazolepropionic acid (AMPA), quisqualic acid, and kainic acid. L-glutamate acts as an excitatory neurotransmitter at many synapses in the central nervous system and plays an important role in fast excitatory synaptic transmission. Binding of the excitatory neurotransmitter L-glutamate induces a conformation change, leading to the opening of the cation channel, and thereby converts the chemical signal to an electrical impulse upon entry of monovalent and divalent cations such as sodium and calcium. The receptor then desensitizes rapidly and enters in a transient inactive state, characterized by the presence of bound agonist. In the presence of CACNG4 or CACNG7 or CACNG8, shows resensitization which is characterized by a delayed accumulation of current flux upon continued application of L-glutamate. Through complex formation with NSG1, GRIP1 and STX12 controls the intracellular fate of AMPAR and the endosomal sorting of the GRIA2 subunit toward recycling and membrane targeting. The protein is Glutamate receptor 2 of Mus musculus (Mouse).